Reading from the N-terminus, the 173-residue chain is Fimbrial protein PrsE (173 aa).

The N-terminal stretch at 1 to 24 (MKKIRGLCLPVMLGAVLMSQHVHA) is a signal peptide.

It localises to the secreted. It is found in the fimbrium. In terms of biological role, fimbriae (also called pili), polar filaments radiating from the surface of the bacterium to a length of 0.5-1.5 micrometers and numbering 100-300 per cell, enable bacteria to colonize the epithelium of specific host organs. The chain is Fimbrial protein PrsE (prsE) from Escherichia coli.